The chain runs to 142 residues: Large ribosomal subunit protein uL13 (142 aa).

The protein belongs to the universal ribosomal protein uL13 family. As to quaternary structure, part of the 50S ribosomal subunit.

This protein is one of the early assembly proteins of the 50S ribosomal subunit, although it is not seen to bind rRNA by itself. It is important during the early stages of 50S assembly. In Methylococcus capsulatus (strain ATCC 33009 / NCIMB 11132 / Bath), this protein is Large ribosomal subunit protein uL13.